Reading from the N-terminus, the 47-residue chain is Defensin NsD7 (47 aa).

Intrachain disulfides connect Cys3-Cys47, Cys14-Cys34, Cys20-Cys41, and Cys24-Cys43. A 1,2-diacyl-sn-glycero-3-phosphate-binding residues include Lys4, His33, Lys36, and Arg39.

The protein belongs to the DEFL family. As to quaternary structure, in the presence of phosphatidic acid (PA), forms right-handed double helices which tend to bundle into fibrils. Each helix is a repetition of dimers containing 2 bound molecules of PA per dimer. Dimers are arranged orthogonally in a tip-to-tip configuration with 1 molecule of PA located at the dimer contact interface. Association of 2 helices to form a double helix depends on intercalating isoleucine residues Ile-15 and Ile-37. Bundling of double helices into fibrils depends on Arg-26.

The protein resides in the vacuole. In terms of biological role, plant defense peptide. Disrupts membranes containing phosphatidic acid (PA) via a PA-dependent oligomerization process. The chain is Defensin NsD7 from Nicotiana suaveolens (Australian tobacco).